A 202-amino-acid polypeptide reads, in one-letter code: Securin (202 aa).

The segment at 36–55 (DGRSQVSTPHVGKMFDAPPA) is disordered. The short motif at 61-64 (RKAL) is the D-box element. 2 short sequence motifs (TEK-box) span residues 71 to 73 (TEK) and 94 to 96 (TEK). Residues 163-173 (PPSPLKMPPLL) carry the SH3-binding motif. The residue at position 165 (S165) is a Phosphoserine; by CDK1.

It belongs to the securin family. Interacts with RPS10 and DNAJA1. Interacts with the caspase-like ESPL1, and prevents its protease activity probably by covering its active site. Interacts with TP53 and blocks its activity probably by blocking its binding to DNA. Interacts with the Ku 70 kDa subunit of ds-DNA kinase. Interacts with PTTG1IP. Phosphorylated at Ser-165 by CDK1 during mitosis. In terms of processing, phosphorylated in vitro by ds-DNA kinase. Post-translationally, ubiquitinated through 'Lys-11' linkage of ubiquitin moieties by the anaphase promoting complex (APC) at the onset of anaphase, conducting to its degradation. 'Lys-11'-linked ubiquitination is mediated by the E2 ligase UBE2C/UBCH10.

The protein localises to the cytoplasm. Its subcellular location is the nucleus. Its function is as follows. Regulatory protein, which plays a central role in chromosome stability, in the p53/TP53 pathway, and DNA repair. Probably acts by blocking the action of key proteins. During the mitosis, it blocks Separase/ESPL1 function, preventing the proteolysis of the cohesin complex and the subsequent segregation of the chromosomes. At the onset of anaphase, it is ubiquitinated, conducting to its destruction and to the liberation of ESPL1. Its function is however not limited to a blocking activity, since it is required to activate ESPL1. Negatively regulates the transcriptional activity and related apoptosis activity of TP53. The negative regulation of TP53 may explain the strong transforming capability of the protein when it is overexpressed. May also play a role in DNA repair via its interaction with Ku, possibly by connecting DNA damage-response pathways with sister chromatid separation. This chain is Securin (PTTG1), found in Bos taurus (Bovine).